Reading from the N-terminus, the 396-residue chain is Purine ribonucleoside efflux pump NepI (396 aa).

At 1 to 21 (MSEFIAENRGADAITRPNWSA) the chain is on the cytoplasmic side. Residues 22–42 (VFSVAFCVACLIIVEFLPVSL) traverse the membrane as a helical segment. Over 43-54 (LTPMAQDLGISE) the chain is Periplasmic. Residues 55 to 75 (GVAGQSVTVTAFVAMFASLFI) traverse the membrane as a helical segment. At 76–85 (TQTIQATDRR) the chain is on the cytoplasmic side. Residues 86-106 (YVVILFAVLLTLSCLLVSFAN) form a helical membrane-spanning segment. Ser-107 is a topological domain (periplasmic). A helical membrane pass occupies residues 108-128 (FSLLLIGRACLGLALGGFWAI). Topologically, residues 129-147 (SASLTMRLVPPRTVPKALS) are cytoplasmic. A helical transmembrane segment spans residues 148–168 (VIFGAVSIALVIAAPLGGFLG). The Periplasmic portion of the chain corresponds to 169-175 (ELIGWRN). A helical membrane pass occupies residues 176-196 (VFNAAAAMGVLCIFWIIKSLP). The Cytoplasmic portion of the chain corresponds to 197–215 (SLPGEPSHQKQNTFRLLQR). A helical membrane pass occupies residues 216–236 (PGVMAGMIAIFMSFAGQFAFF). The Periplasmic segment spans residues 237–255 (TYIRPVYMNLAGFGVDGLT). A helical transmembrane segment spans residues 256–276 (LVLLSFGIASFVGTSLSSFIL). Residues 277-281 (KRSVK) lie on the Cytoplasmic side of the membrane. A helical transmembrane segment spans residues 282-302 (LALAGAPFVLALSALVLTLWG). Residues 303 to 305 (SDK) are Periplasmic-facing. Residues 306–326 (IVATGVAIIWGLTFALIPVGW) form a helical membrane-spanning segment. The Cytoplasmic segment spans residues 327 to 343 (STWITRSLADQAEKAGS). A helical membrane pass occupies residues 344–364 (IQVAVIQLANTCGAAIGGYAL). The Periplasmic segment spans residues 365-366 (DN). A helical transmembrane segment spans residues 367–387 (IGLTSPLMLSGTLMLLTALLV). Residues 388 to 396 (TAKVKMKKS) lie on the Cytoplasmic side of the membrane.

It belongs to the major facilitator superfamily. DHA1 family. NepI (TC 2.A.1.2.26) subfamily.

It is found in the cell inner membrane. The enzyme catalyses inosine(in) + H(+)(out) = inosine(out) + H(+)(in). It carries out the reaction guanosine(in) + H(+)(out) = guanosine(out) + H(+)(in). Functionally, involved in the efflux of purine ribonucleosides, such as inosine and guanosine. This chain is Purine ribonucleoside efflux pump NepI, found in Escherichia coli O127:H6 (strain E2348/69 / EPEC).